A 275-amino-acid chain; its full sequence is Formamidopyrimidine-DNA glycosylase (275 aa).

Proline 2 acts as the Schiff-base intermediate with DNA in catalysis. The active-site Proton donor is the glutamate 3. The Proton donor; for beta-elimination activity role is filled by lysine 59. DNA contacts are provided by histidine 93, arginine 112, and arginine 153. The FPG-type zinc-finger motif lies at 238–272 (NVYDRVGKPCPRCQTAIERIVVAQRSTFFCPLCQV). Arginine 262 acts as the Proton donor; for delta-elimination activity in catalysis.

The protein belongs to the FPG family. As to quaternary structure, monomer. The cofactor is Zn(2+).

It carries out the reaction Hydrolysis of DNA containing ring-opened 7-methylguanine residues, releasing 2,6-diamino-4-hydroxy-5-(N-methyl)formamidopyrimidine.. The enzyme catalyses 2'-deoxyribonucleotide-(2'-deoxyribose 5'-phosphate)-2'-deoxyribonucleotide-DNA = a 3'-end 2'-deoxyribonucleotide-(2,3-dehydro-2,3-deoxyribose 5'-phosphate)-DNA + a 5'-end 5'-phospho-2'-deoxyribonucleoside-DNA + H(+). Functionally, involved in base excision repair of DNA damaged by oxidation or by mutagenic agents. Acts as a DNA glycosylase that recognizes and removes damaged bases. Has a preference for oxidized purines, such as 7,8-dihydro-8-oxoguanine (8-oxoG). Has AP (apurinic/apyrimidinic) lyase activity and introduces nicks in the DNA strand. Cleaves the DNA backbone by beta-delta elimination to generate a single-strand break at the site of the removed base with both 3'- and 5'-phosphates. In Chloroflexus aggregans (strain MD-66 / DSM 9485), this protein is Formamidopyrimidine-DNA glycosylase.